Reading from the N-terminus, the 404-residue chain is MSPSDVPINWKRNLTVTWLGCFLTGAAFSLVMPFLPLYVEQLGVTGHSALNMWSGLVFSITFLFSAIASPFWGGLADRKGRKIMLLRSALGMAIVMLLMGMAQNIWQFLILRALLGLLGGFIPNANALIATQVPRHKSGWALGTLSTGGVSGALLGPLAGGLLADHYGLRPVFFITASVLFICFLLTFFFIHENFLPVSKKEMLHVREVVASLKNPRLVLSLFVTTLIIQVATGSIAPILTLYVRELAGDVSNIAFISGMIASVPGVAALLSAPRLGKLGDRIGPEKILIVALIISVLLLIPMSFVQTPWQLALLRFLLGAADGALLPAVQTLLVYNSTNQIAGRIFSYNQSFRDIGNVTGPLMGAAISASYGFRAVFCVTAGVVLFNAIYSWNSLRRRRLAIE.

11 helical membrane passes run 19–39 (LGCF…PLYV), 56–76 (LVFS…GGLA), 90–110 (LGMA…QFLI), 113–133 (ALLG…ATQV), 144–164 (TLST…GLLA), 171–191 (PVFF…FFFI), 222–242 (LFVT…ILTL), 254–274 (IAFI…LSAP), 288–308 (ILIV…FVQT), 317–337 (FLLG…LVYN), and 376–396 (AVFC…WNSL).

Belongs to the major facilitator superfamily. DHA1 family. MdtG (TC 2.A.1.2.20) subfamily.

The protein resides in the cell inner membrane. This chain is Multidrug resistance protein MdtG, found in Salmonella dublin (strain CT_02021853).